A 626-amino-acid chain; its full sequence is Chaperone protein DnaK (626 aa).

Phosphothreonine; by autocatalysis is present on T175. Disordered stretches follow at residues 469–488, 498–517, and 583–626; these read DKGT…GLPK, AEAH…TRNQ, and AQQG…KDNK. Residues 498–516 are compositionally biased toward basic and acidic residues; sequence AEAHEAEDKKRKEDAETRN. Acidic residues predominate over residues 609 to 626; sequence SDDDVVDAEVVDDDKDNK.

The protein belongs to the heat shock protein 70 family.

In terms of biological role, acts as a chaperone. In Bifidobacterium adolescentis (strain ATCC 15703 / DSM 20083 / NCTC 11814 / E194a), this protein is Chaperone protein DnaK.